A 439-amino-acid chain; its full sequence is Rho GTPase-activating protein 1 (439 aa).

Methionine 1 is modified (N-acetylmethionine). The span at 28 to 48 (IDEKNWPSDEMPDFPKSDDSK) shows a compositional bias: basic and acidic residues. The tract at residues 28 to 52 (IDEKNWPSDEMPDFPKSDDSKSSSP) is disordered. Serine 44, serine 47, serine 50, and serine 51 each carry phosphoserine. One can recognise a CRAL-TRIO domain in the interval 63–218 (PYYDIARHQI…QVLKYDDFLK (156 aa)). Tyrosine 65 carries the phosphotyrosine modification. At lysine 80 the chain carries N6-acetyllysine. The short motif at 228-238 (PKPMPPRPPLP) is the SH3-binding element. In terms of domain architecture, Rho-GAP spans 244 to 431 (VSLQHLQEKN…FLLDHQGELF (188 aa)).

Found in a complex with XPO7, EIF4A1, ARHGAP1, VPS26A, VPS29, VPS35 and SFN. Interacts with BNIPL. Ubiquitous.

It is found in the cytoplasm. Functionally, GTPase activator for the Rho, Rac and Cdc42 proteins, converting them to the putatively inactive GDP-bound state. Cdc42 seems to be the preferred substrate. This is Rho GTPase-activating protein 1 (ARHGAP1) from Homo sapiens (Human).